Reading from the N-terminus, the 289-residue chain is Formamidopyrimidine-DNA glycosylase (289 aa).

The active-site Schiff-base intermediate with DNA is the Pro2. The Proton donor role is filled by Glu3. Catalysis depends on Lys61, which acts as the Proton donor; for beta-elimination activity. Residues His96, Arg115, and Lys161 each contribute to the DNA site. The segment at 247 to 281 (SAYGQENLPCPRCGAPIKREKFMNRSSFSCPRCQP) adopts an FPG-type zinc-finger fold. Arg271 serves as the catalytic Proton donor; for delta-elimination activity.

Belongs to the FPG family. In terms of assembly, monomer. Requires Zn(2+) as cofactor.

It catalyses the reaction Hydrolysis of DNA containing ring-opened 7-methylguanine residues, releasing 2,6-diamino-4-hydroxy-5-(N-methyl)formamidopyrimidine.. It carries out the reaction 2'-deoxyribonucleotide-(2'-deoxyribose 5'-phosphate)-2'-deoxyribonucleotide-DNA = a 3'-end 2'-deoxyribonucleotide-(2,3-dehydro-2,3-deoxyribose 5'-phosphate)-DNA + a 5'-end 5'-phospho-2'-deoxyribonucleoside-DNA + H(+). Involved in base excision repair of DNA damaged by oxidation or by mutagenic agents. Acts as a DNA glycosylase that recognizes and removes damaged bases. Has a preference for oxidized purines, such as 7,8-dihydro-8-oxoguanine (8-oxoG). Has AP (apurinic/apyrimidinic) lyase activity and introduces nicks in the DNA strand. Cleaves the DNA backbone by beta-delta elimination to generate a single-strand break at the site of the removed base with both 3'- and 5'-phosphates. This is Formamidopyrimidine-DNA glycosylase from Rhodococcus erythropolis (strain PR4 / NBRC 100887).